The chain runs to 346 residues: MTSMYYNHDHLTASGKNMWSNFYVLVDTAVMLYEEEKQRRKIVSEEEEETQKRIFCLFPRKTRSSLVKRQQKLSGFLTSASSSLIDLNQFPSDSEIEDPLNHHQLLSSSCFIAADFETLQNPSSEPCSSLVLFDCKTAGSEKTETKDPPNPNFPCPLSLCLTENKNRKRRAVEQRKRTGGVKKAKVAPFSQTARETPEWLVNVMRDMKEAKDAKLIFEKTLFVTDVNPTQNRLSMPFNNLLRNDFLTSVESRIIDKDIKNDKKIGVGAILVDQRCKKWGVMLKRWEMKKESGKGSWNYNLICGWNDIVEANGLKEGDNISLWSFRSCGILCFAMEQRSPSLALCLC.

The interval 168–187 is disordered; that stretch reads KRRAVEQRKRTGGVKKAKVA. The TF-B3 DNA-binding region spans 237–338; sequence FNNLLRNDFL…ILCFAMEQRS (102 aa).

Its subcellular location is the nucleus. The sequence is that of B3 domain-containing protein At3g25182 from Arabidopsis thaliana (Mouse-ear cress).